The primary structure comprises 1074 residues: Transmembrane protein 132E (1074 aa).

Positions 1–25 are cleaved as a signal peptide; that stretch reads MAPGMSGRGGAALLCLSALLAHASG. Residues 26 to 893 lie on the Extracellular side of the membrane; sequence RSHPASPSPP…LTDLEIGMYA (868 aa). 2 N-linked (GlcNAc...) asparagine glycosylation sites follow: Asn70 and Asn91. 2 disordered regions span residues 202–226 and 241–264; these read PPAPAAPPTARRKSPDGLEPEATGE and ASGGCGGSRRGAGPGVGARAESPT. Residues 243–256 show a composition bias toward gly residues; the sequence is GGCGGSRRGAGPGV. 2 N-linked (GlcNAc...) asparagine glycosylation sites follow: Asn318 and Asn399. Disordered stretches follow at residues 563-585 and 814-867; these read RSVRESEDEDEEEEERRQSASRG and GRDE…VPPT. Low complexity predominate over residues 841–862; the sequence is GAGPPGSALPAPEAPGPGTASP. The helical transmembrane segment at 894–914 threads the bilayer; that stretch reads LLGVFCLAILVFLINCIVFVL. Residues 915–1074 are Cytoplasmic-facing; sequence RYRHKRIPPE…NYMRRIKEIA (160 aa). The tract at residues 946 to 1063 is disordered; it reads VQGELSPPAG…PTRPTAPPDL (118 aa). Low complexity predominate over residues 972 to 984; it reads SGSSQTSVQSQVH. Residues 1034–1044 show a composition bias toward acidic residues; it reads GEEDEEEEEDL.

The protein belongs to the TMEM132 family.

The protein localises to the membrane. Required for normal inner ear hair cell function and hearing. The chain is Transmembrane protein 132E from Homo sapiens (Human).